A 66-amino-acid polypeptide reads, in one-letter code: UPF0337 protein spyM18_1212 (66 aa).

Belongs to the UPF0337 (CsbD) family.

The polypeptide is UPF0337 protein spyM18_1212 (Streptococcus pyogenes serotype M18 (strain MGAS8232)).